Reading from the N-terminus, the 250-residue chain is Expansin-like B1 (250 aa).

Positions 1–24 are cleaved as a signal peptide; it reads MKHSHVLLLLFVQVIVLLPLLCLS. Positions 45–149 constitute an Expansin-like EG45 domain; the sequence is RGHCGYGEFG…QRIPCRYAGY (105 aa). The N-linked (GlcNAc...) asparagine glycan is linked to Asn-72. One can recognise an Expansin-like CBD domain in the interval 163 to 245; that stretch reads HYLAILVLYV…DWTAGATYDS (83 aa).

It belongs to the expansin family. Expansin-like B subfamily.

The protein resides in the secreted. The chain is Expansin-like B1 (EXLB1) from Arabidopsis thaliana (Mouse-ear cress).